The sequence spans 393 residues: Lipid-A-disaccharide synthase (393 aa).

Belongs to the LpxB family.

It catalyses the reaction a lipid X + a UDP-2-N,3-O-bis[(3R)-3-hydroxyacyl]-alpha-D-glucosamine = a lipid A disaccharide + UDP + H(+). It participates in bacterial outer membrane biogenesis; LPS lipid A biosynthesis. Its function is as follows. Condensation of UDP-2,3-diacylglucosamine and 2,3-diacylglucosamine-1-phosphate to form lipid A disaccharide, a precursor of lipid A, a phosphorylated glycolipid that anchors the lipopolysaccharide to the outer membrane of the cell. In Rhodopseudomonas palustris (strain ATCC BAA-98 / CGA009), this protein is Lipid-A-disaccharide synthase.